The chain runs to 238 residues: Type III secretion protein hrcQa (238 aa).

A hrcQa-C region spans residues 66 to 238 (DAEALLSLLG…SHEEHRHHEY (173 aa)).

As to quaternary structure, interacts with hrcQb.

The protein localises to the cell inner membrane. In terms of biological role, component of the type III secretion system, which is required for effector protein delivery, parasitism, and pathogenicity. Probably participates in the formation of a C-ring-like assembly along with hrcQb. This is Type III secretion protein hrcQa (hrcQa) from Pseudomonas savastanoi pv. phaseolicola (Pseudomonas syringae pv. phaseolicola).